Reading from the N-terminus, the 353-residue chain is DNA-directed RNA polymerase subunit alpha (353 aa).

The segment at 1–245 is alpha N-terminal domain (alpha-NTD); that stretch reads MEKIQKITYK…AHFQIIGNIN (245 aa). Residues 261–353 are alpha C-terminal domain (alpha-CTD); sequence EREIKSTTPI…QLNNSEEGEE (93 aa).

This sequence belongs to the RNA polymerase alpha chain family. As to quaternary structure, homodimer. The RNAP catalytic core consists of 2 alpha, 1 beta, 1 beta' and 1 omega subunit. When a sigma factor is associated with the core the holoenzyme is formed, which can initiate transcription.

The enzyme catalyses RNA(n) + a ribonucleoside 5'-triphosphate = RNA(n+1) + diphosphate. Functionally, DNA-dependent RNA polymerase catalyzes the transcription of DNA into RNA using the four ribonucleoside triphosphates as substrates. The protein is DNA-directed RNA polymerase subunit alpha of Mycoplasma sp.